The following is a 261-amino-acid chain: UPF0328 protein ECU02_0020/ECU04_1700 (261 aa).

A disordered region spans residues 1–20 (MSITSIPQPHETNEQHHTEI). The segment covering 11–20 (ETNEQHHTEI) has biased composition (basic and acidic residues).

The protein belongs to the UPF0328 family.

This Encephalitozoon cuniculi (strain GB-M1) (Microsporidian parasite) protein is UPF0328 protein ECU02_0020/ECU04_1700.